A 432-amino-acid polypeptide reads, in one-letter code: Histidine--tRNA ligase (432 aa).

Belongs to the class-II aminoacyl-tRNA synthetase family.

Its subcellular location is the cytoplasm. The catalysed reaction is tRNA(His) + L-histidine + ATP = L-histidyl-tRNA(His) + AMP + diphosphate + H(+). The polypeptide is Histidine--tRNA ligase (Halobacterium salinarum (strain ATCC 29341 / DSM 671 / R1)).